The chain runs to 363 residues: Phosphoserine aminotransferase (363 aa).

Position 42 (Arg-42) interacts with L-glutamate. Residues 76–77 (GR), Trp-102, Thr-156, Asp-175, and Gln-198 contribute to the pyridoxal 5'-phosphate site. Position 199 is an N6-(pyridoxal phosphate)lysine (Lys-199). 240-241 (NT) provides a ligand contact to pyridoxal 5'-phosphate.

It belongs to the class-V pyridoxal-phosphate-dependent aminotransferase family. SerC subfamily. As to quaternary structure, homodimer. Pyridoxal 5'-phosphate serves as cofactor.

The protein localises to the cytoplasm. The catalysed reaction is O-phospho-L-serine + 2-oxoglutarate = 3-phosphooxypyruvate + L-glutamate. The enzyme catalyses 4-(phosphooxy)-L-threonine + 2-oxoglutarate = (R)-3-hydroxy-2-oxo-4-phosphooxybutanoate + L-glutamate. The protein operates within amino-acid biosynthesis; L-serine biosynthesis; L-serine from 3-phospho-D-glycerate: step 2/3. It functions in the pathway cofactor biosynthesis; pyridoxine 5'-phosphate biosynthesis; pyridoxine 5'-phosphate from D-erythrose 4-phosphate: step 3/5. In terms of biological role, catalyzes the reversible conversion of 3-phosphohydroxypyruvate to phosphoserine and of 3-hydroxy-2-oxo-4-phosphonooxybutanoate to phosphohydroxythreonine. The sequence is that of Phosphoserine aminotransferase from Shewanella sp. (strain W3-18-1).